Here is a 490-residue protein sequence, read N- to C-terminus: Protein nucleotidyltransferase YdiU (490 aa).

8 residues coordinate ATP: G86, G88, R89, K109, D121, G122, R172, and R179. The Proton acceptor role is filled by D248. N249 and D258 together coordinate Mg(2+). D258 is an ATP binding site.

The protein belongs to the SELO family. The cofactor is Mg(2+). Mn(2+) serves as cofactor.

The enzyme catalyses L-seryl-[protein] + ATP = 3-O-(5'-adenylyl)-L-seryl-[protein] + diphosphate. It carries out the reaction L-threonyl-[protein] + ATP = 3-O-(5'-adenylyl)-L-threonyl-[protein] + diphosphate. The catalysed reaction is L-tyrosyl-[protein] + ATP = O-(5'-adenylyl)-L-tyrosyl-[protein] + diphosphate. It catalyses the reaction L-histidyl-[protein] + UTP = N(tele)-(5'-uridylyl)-L-histidyl-[protein] + diphosphate. The enzyme catalyses L-seryl-[protein] + UTP = O-(5'-uridylyl)-L-seryl-[protein] + diphosphate. It carries out the reaction L-tyrosyl-[protein] + UTP = O-(5'-uridylyl)-L-tyrosyl-[protein] + diphosphate. Nucleotidyltransferase involved in the post-translational modification of proteins. It can catalyze the addition of adenosine monophosphate (AMP) or uridine monophosphate (UMP) to a protein, resulting in modifications known as AMPylation and UMPylation. The polypeptide is Protein nucleotidyltransferase YdiU (Rhizobium meliloti (strain 1021) (Ensifer meliloti)).